The primary structure comprises 207 residues: Ribosomal RNA small subunit methyltransferase G (207 aa).

S-adenosyl-L-methionine is bound by residues Gly-73, Leu-78, 124 to 125, and Arg-139; that span reads VE.

The protein belongs to the methyltransferase superfamily. RNA methyltransferase RsmG family.

Its subcellular location is the cytoplasm. It catalyses the reaction guanosine(527) in 16S rRNA + S-adenosyl-L-methionine = N(7)-methylguanosine(527) in 16S rRNA + S-adenosyl-L-homocysteine. In terms of biological role, specifically methylates the N7 position of guanine in position 527 of 16S rRNA. This is Ribosomal RNA small subunit methyltransferase G from Klebsiella pneumoniae (strain 342).